The chain runs to 212 residues: ATP synthase F(0) complex subunit a (212 aa).

A run of 6 helical transmembrane segments spans residues 3-23 (MMGI…IYTS), 58-78 (WAAM…LGLL), 87-107 (QLSM…LTGL), 128-148 (IPLL…ALGV), 169-189 (FVLL…LVLL), and 192-212 (LEIA…TLYL).

It belongs to the ATPase A chain family. Component of the ATP synthase complex composed at least of ATP5F1A/subunit alpha, ATP5F1B/subunit beta, ATP5MC1/subunit c (homooctomer), MT-ATP6/subunit a, MT-ATP8/subunit 8, ATP5ME/subunit e, ATP5MF/subunit f, ATP5MG/subunit g, ATP5MK/subunit k, ATP5MJ/subunit j, ATP5F1C/subunit gamma, ATP5F1D/subunit delta, ATP5F1E/subunit epsilon, ATP5PF/subunit F6, ATP5PB/subunit b, ATP5PD/subunit d, ATP5PO/subunit OSCP. ATP synthase complex consists of a soluble F(1) head domain (subunits alpha(3) and beta(3)) - the catalytic core - and a membrane F(0) domain - the membrane proton channel (subunits c, a, 8, e, f, g, k and j). These two domains are linked by a central stalk (subunits gamma, delta, and epsilon) rotating inside the F1 region and a stationary peripheral stalk (subunits F6, b, d, and OSCP). Interacts with DNAJC30; interaction is direct.

The protein resides in the mitochondrion inner membrane. It carries out the reaction H(+)(in) = H(+)(out). In terms of biological role, subunit a, of the mitochondrial membrane ATP synthase complex (F(1)F(0) ATP synthase or Complex V) that produces ATP from ADP in the presence of a proton gradient across the membrane which is generated by electron transport complexes of the respiratory chain. ATP synthase complex consist of a soluble F(1) head domain - the catalytic core - and a membrane F(1) domain - the membrane proton channel. These two domains are linked by a central stalk rotating inside the F(1) region and a stationary peripheral stalk. During catalysis, ATP synthesis in the catalytic domain of F(1) is coupled via a rotary mechanism of the central stalk subunits to proton translocation. With the subunit c (ATP5MC1), forms the proton-conducting channel in the F(0) domain, that contains two crucial half-channels (inlet and outlet) that facilitate proton movement from the mitochondrial intermembrane space (IMS) into the matrix. Protons are taken up via the inlet half-channel and released through the outlet half-channel, following a Grotthuss mechanism. This Tropidurus hispidus (Peters' lava lizard) protein is ATP synthase F(0) complex subunit a.